A 660-amino-acid chain; its full sequence is Alpha-1,2-mannosyltransferase MNN21 (660 aa).

Residues methionine 1–lysine 17 are Cytoplasmic-facing. A helical membrane pass occupies residues tyrosine 18 to tryptophan 38. Residues serine 39–aspartate 660 lie on the Extracellular side of the membrane. The tract at residues proline 75–leucine 125 is disordered. Residue asparagine 657 is glycosylated (N-linked (GlcNAc...) asparagine).

This sequence belongs to the MNN1/MNT family.

It localises to the golgi apparatus membrane. It participates in protein modification; protein glycosylation. Alpha-1,2-mannosyltransferase required for cell wall integrity. Responsible for addition of the first alpha-1,2-linked mannose to form the branches on the mannan backbone of oligosaccharides. Addition of alpha-1,2-mannose is required for stabilization of the alpha-1,6-mannose backbone and hence regulates mannan fibril length; and is important for both immune recognition and virulence. The protein is Alpha-1,2-mannosyltransferase MNN21 (MNN21) of Candida albicans (strain SC5314 / ATCC MYA-2876) (Yeast).